The sequence spans 420 residues: Putative transporter AmpG 3 (420 aa).

12 helical membrane-spanning segments follow: residues 6–26 (YLIG…LIFF), 41–61 (IVGS…WSPF), 79–99 (GWAL…LKRS), 104–124 (LCIT…QDIV), 141–161 (IAFT…SVGA), 166–186 (IIFG…VGPI), 230–250 (LLLI…PMAM), 274–294 (LLIM…IGIF), 297–317 (VLIG…LATI), 324–344 (FIIT…IISI), 359–381 (YSIS…GICA), and 386–406 (WPVF…IFYI).

The protein belongs to the major facilitator superfamily.

The protein resides in the cell inner membrane. This chain is Putative transporter AmpG 3 (ampG3), found in Rickettsia typhi (strain ATCC VR-144 / Wilmington).